We begin with the raw amino-acid sequence, 243 residues long: Exosome complex component Rrp41 (243 aa).

It belongs to the RNase PH family. Rrp41 subfamily. In terms of assembly, component of the archaeal exosome complex. Forms a hexameric ring-like arrangement composed of 3 Rrp41-Rrp42 heterodimers. The hexameric ring associates with a trimer of Rrp4 and/or Csl4 subunits.

It is found in the cytoplasm. In terms of biological role, catalytic component of the exosome, which is a complex involved in RNA degradation. Has 3'-&gt;5' exoribonuclease activity. Can also synthesize heteromeric RNA-tails. The chain is Exosome complex component Rrp41 from Sulfolobus acidocaldarius (strain ATCC 33909 / DSM 639 / JCM 8929 / NBRC 15157 / NCIMB 11770).